Reading from the N-terminus, the 196-residue chain is Imidazole glycerol phosphate synthase subunit HisH (196 aa).

In terms of domain architecture, Glutamine amidotransferase type-1 spans 2 to 196 (KATLINYGVG…LRNFYSWVKR (195 aa)). The active-site Nucleophile is the C76. Residues H175 and E177 contribute to the active site.

Heterodimer of HisH and HisF.

The protein localises to the cytoplasm. The catalysed reaction is 5-[(5-phospho-1-deoxy-D-ribulos-1-ylimino)methylamino]-1-(5-phospho-beta-D-ribosyl)imidazole-4-carboxamide + L-glutamine = D-erythro-1-(imidazol-4-yl)glycerol 3-phosphate + 5-amino-1-(5-phospho-beta-D-ribosyl)imidazole-4-carboxamide + L-glutamate + H(+). It catalyses the reaction L-glutamine + H2O = L-glutamate + NH4(+). The protein operates within amino-acid biosynthesis; L-histidine biosynthesis; L-histidine from 5-phospho-alpha-D-ribose 1-diphosphate: step 5/9. IGPS catalyzes the conversion of PRFAR and glutamine to IGP, AICAR and glutamate. The HisH subunit catalyzes the hydrolysis of glutamine to glutamate and ammonia as part of the synthesis of IGP and AICAR. The resulting ammonia molecule is channeled to the active site of HisF. This chain is Imidazole glycerol phosphate synthase subunit HisH, found in Sulfurisphaera tokodaii (strain DSM 16993 / JCM 10545 / NBRC 100140 / 7) (Sulfolobus tokodaii).